The chain runs to 147 residues: Hemoglobin subunit gamma (147 aa).

The 145-residue stretch at 3-147 (NFTAEDKAAI…VASALASRYH (145 aa)) folds into the Globin domain. The heme b site is built by histidine 64 and histidine 93.

The protein belongs to the globin family. In terms of assembly, heterotetramer of two alpha chains and two gamma chains in fetal hemoglobin (Hb F). In terms of tissue distribution, red blood cells.

Its function is as follows. Gamma chains make up the fetal hemoglobin F, in combination with alpha chains. This chain is Hemoglobin subunit gamma (HBG), found in Alouatta belzebul (Red-handed howler monkey).